The sequence spans 1347 residues: Serine-aspartate repeat-containing protein D (1347 aa).

Positions 1 to 35 (MLNRENKTAITRKGMVSNRLNKFSIRKYTVGTASI) are cleaved as a signal peptide. A YSIRK-G/S signaling motif motif is present at residues 23–34 (FSIRKYTVGTAS). Residues 36–568 (LVGTTLIFGL…NNQSGGAGQE (533 aa)) are ligand binding A region. Residues 55–185 (STNKELNEAT…NKKVDAKTES (131 aa)) are disordered. Composition is skewed to polar residues over residues 62–71 (EATTSASDNQ) and 94–109 (EMVSSQGNETTSNGNK). Residues 130–145 (KSDEQASPKSTNEDLN) show a composition bias toward basic and acidic residues. 2 stretches are compositionally biased toward polar residues: residues 146 to 155 (TKQTISNQEA) and 163 to 173 (NKSVVNAQPTN). Positions 174–183 (EENKKVDAKT) are enriched in basic and acidic residues. 5 consecutive CNA-B domains span residues 569 to 680 (VYKI…IYKP), 681 to 791 (KYNL…YKTP), 792 to 901 (KYNL…FYKP), 902 to 1012 (TYNL…YKTS), and 1013 to 1123 (KYSL…EEDT). Disordered regions lie at residues 857–883 (ETPSGYTPTQVGSGTDEGIDSNGTSTT), 972–992 (YTPTSVTSGNDTEKDSNGLTT), and 1078–1323 (EKPA…SNNA). Composition is skewed to polar residues over residues 860 to 869 (SGYTPTQVGS) and 972 to 981 (YTPTSVTSGN). Acidic residues-rich tracts occupy residues 1091–1101 (TEDDKDADGGE) and 1118–1286 (YFEE…DSDS). An LPXTG sorting signal motif is present at residues 1310 to 1314 (LPETG). T1313 is modified (pentaglycyl murein peptidoglycan amidated threonine). Residues 1314-1347 (GNENSGSNNATLFGGLFAALGSLLLFGRRKKQNK) constitute a propeptide, removed by sortase.

Belongs to the serine-aspartate repeat-containing protein (SDr) family. In terms of assembly, interacts with host DSG1; this interaction increases S.aureus adherence to keratinocytes.

It is found in the secreted. Its subcellular location is the cell wall. Its function is as follows. Cell surface-associated calcium-binding protein which plays an important role in adhesion and pathogenesis. Mediates interactions with components of the extracellular matrix such as host DSG1 to promote bacterial adhesion to host cells. Contributes to the resistance to killing by innate immune components such as neutrophils present in blood and thus attenuates bacterial clearance. This is Serine-aspartate repeat-containing protein D (sdrD) from Staphylococcus aureus (strain MW2).